A 342-amino-acid chain; its full sequence is DNA-directed RNA polymerase subunit alpha (342 aa).

The segment at 1–239 (MTTFLAKNWS…DQLQVFINFQ (239 aa)) is alpha N-terminal domain (alpha-NTD). An alpha C-terminal domain (alpha-CTD) region spans residues 254-342 (INPVLLKKVY…SLAKKHEDQY (89 aa)).

The protein belongs to the RNA polymerase alpha chain family. In terms of assembly, homodimer. The RNAP catalytic core consists of 2 alpha, 1 beta, 1 beta' and 1 omega subunit. When a sigma factor is associated with the core the holoenzyme is formed, which can initiate transcription.

It catalyses the reaction RNA(n) + a ribonucleoside 5'-triphosphate = RNA(n+1) + diphosphate. Its function is as follows. DNA-dependent RNA polymerase catalyzes the transcription of DNA into RNA using the four ribonucleoside triphosphates as substrates. This is DNA-directed RNA polymerase subunit alpha from Orientia tsutsugamushi (strain Ikeda) (Rickettsia tsutsugamushi).